The sequence spans 2005 residues: Chitin synthase 8 (2005 aa).

The Myosin motor domain maps to 5 to 773; the sequence is DEVAKLSQLT…AFRELEDELR (769 aa). Residue 108–115 coordinates ATP; it reads GDTSSGKS. Asparagine 164, asparagine 364, asparagine 390, and asparagine 546 each carry an N-linked (GlcNAc...) asparagine glycan. Positions 585–631 are disordered; sequence QSVKPMRAPSTRRPNRGNTIKRTNTIKKADDDDSDEDAADAADASTS. The span at 615-624 shows a compositional bias: acidic residues; it reads DDDSDEDAAD. The interval 647–669 is actin-binding; sequence LDLLLETLEDTKTWFTLCLRPND. The next 2 helical transmembrane spans lie at 929–949 and 965–985; these read KWVA…LSRF and LAIN…IVVL. Asparagine 1076 is a glycosylation site (N-linked (GlcNAc...) asparagine). 3 helical membrane passes run 1232-1252, 1604-1624, and 1626-1646; these read ILLA…LAAL, LIFT…IVFI, and LLST…IVLV. N-linked (GlcNAc...) asparagine glycosylation is present at asparagine 1650. The next 2 helical transmembrane spans lie at 1653-1673 and 1680-1700; these read VPLT…VIFL and MIGW…FLPL. Residues asparagine 1770 and asparagine 1794 are each glycosylated (N-linked (GlcNAc...) asparagine). The interval 1796-1821 is disordered; it reads SFGHSPSPSYGGTPSQFGAFAPGPGS. Residues 1797-1811 are compositionally biased toward polar residues; the sequence is FGHSPSPSYGGTPSQ. An N-linked (GlcNAc...) asparagine glycan is attached at asparagine 1882. Residues 1912 to 1950 are disordered; it reads FATAEQQQQQQQQQQAAGLSGSGGSKSPPREAVAGGLPS. Low complexity predominate over residues 1917-1930; sequence QQQQQQQQQQAAGL. Residues 1948 to 2003 form the DEK-C domain; that stretch reads LPSDSQIKLDIRSLIAESDLTTITKKQLRAKLEQKYATSIESKKAFINSEIENVLS.

The protein in the N-terminal section; belongs to the TRAFAC class myosin-kinesin ATPase superfamily. Myosin family. In the C-terminal section; belongs to the chitin synthase family. Class V subfamily.

The protein resides in the cell membrane. It is found in the cytoplasmic vesicle membrane. The protein localises to the cell tip. The enzyme catalyses [(1-&gt;4)-N-acetyl-beta-D-glucosaminyl](n) + UDP-N-acetyl-alpha-D-glucosamine = [(1-&gt;4)-N-acetyl-beta-D-glucosaminyl](n+1) + UDP + H(+). In terms of biological role, polymerizes chitin, a structural polymer of the cell wall and septum, by transferring the sugar moiety of UDP-GlcNAc to the non-reducing end of the growing chitin polymer. Involved in mating tube and dikaryotic hyphae formation and required for the formation of invading hyphae during plant infection. In Mycosarcoma maydis (Corn smut fungus), this protein is Chitin synthase 8.